Reading from the N-terminus, the 198-residue chain is Recombination protein RecR (198 aa).

Residues 57–72 (CSECQTLTDKDPCAVC) form a C4-type zinc finger. One can recognise a Toprim domain in the interval 80 to 175 (RIICVVEGVP…KVTRIAQGIP (96 aa)).

Belongs to the RecR family.

Functionally, may play a role in DNA repair. It seems to be involved in an RecBC-independent recombinational process of DNA repair. It may act with RecF and RecO. The polypeptide is Recombination protein RecR (Anaeromyxobacter sp. (strain Fw109-5)).